The following is a 130-amino-acid chain: Glycine cleavage system H protein (130 aa).

The region spanning 22–103 (QAWIGISDYA…PYANYIVVVA (82 aa)) is the Lipoyl-binding domain. K63 carries the post-translational modification N6-lipoyllysine.

The protein belongs to the GcvH family. In terms of assembly, the glycine cleavage system is composed of four proteins: P, T, L and H. Requires (R)-lipoate as cofactor.

In terms of biological role, the glycine cleavage system catalyzes the degradation of glycine. The H protein shuttles the methylamine group of glycine from the P protein to the T protein. In Syntrophomonas wolfei subsp. wolfei (strain DSM 2245B / Goettingen), this protein is Glycine cleavage system H protein.